The chain runs to 694 residues: Elongation factor G (694 aa).

Residues 9–288 (DAIRNIGIMA…VIVKWLPSPL (280 aa)) enclose the tr-type G domain. GTP-binding positions include 18-25 (AHIDAGKT), 82-86 (DTPGH), and 136-139 (NKMD).

Belongs to the TRAFAC class translation factor GTPase superfamily. Classic translation factor GTPase family. EF-G/EF-2 subfamily.

It is found in the cytoplasm. Its function is as follows. Catalyzes the GTP-dependent ribosomal translocation step during translation elongation. During this step, the ribosome changes from the pre-translocational (PRE) to the post-translocational (POST) state as the newly formed A-site-bound peptidyl-tRNA and P-site-bound deacylated tRNA move to the P and E sites, respectively. Catalyzes the coordinated movement of the two tRNA molecules, the mRNA and conformational changes in the ribosome. This chain is Elongation factor G, found in Chlamydia trachomatis serovar A (strain ATCC VR-571B / DSM 19440 / HAR-13).